We begin with the raw amino-acid sequence, 173 residues long: Large ribosomal subunit protein uL5 (173 aa).

The protein belongs to the universal ribosomal protein uL5 family. As to quaternary structure, part of the 50S ribosomal subunit; contacts the 5S rRNA and probably tRNA. Forms a bridge to the 30S subunit in the 70S ribosome.

Functionally, this is one of the proteins that bind and probably mediate the attachment of the 5S RNA into the large ribosomal subunit, where it forms part of the central protuberance. In the 70S ribosome it contacts protein S13 of the 30S subunit (bridge B1b), connecting the 2 subunits; this bridge is implicated in subunit movement. May contact the P site tRNA; the 5S rRNA and some of its associated proteins might help stabilize positioning of ribosome-bound tRNAs. In Nitrosopumilus maritimus (strain SCM1), this protein is Large ribosomal subunit protein uL5.